The primary structure comprises 309 residues: UDP-URONIC ACID TRANSPORTER 1 (309 aa).

Helical transmembrane passes span 9–29 (TLFI…VLLL), 43–63 (IFLT…SIVF), 78–98 (FLKV…GNIS), 104–124 (VSFN…FAYL), 131–151 (AWVT…ASGG), 152–172 (EPGF…ARAF), 193–213 (LMLY…LFME), 231–251 (WILL…NFLV), 256–278 (SALT…SILI), and 283–302 (VTVM…VAYG).

Belongs to the TPT transporter family. TPT (TC 2.A.7.9) subfamily. In terms of tissue distribution, ubiquitous.

It localises to the golgi apparatus membrane. Its function is as follows. UDP-glucuronic acid transporter that modulates the polysaccharide composition of seed mucilage. Transports UDP-glucuronic acid (UDP-GlcA) and UDP-galacturonic acid (UDP-GalA) in vitro. The protein is UDP-URONIC ACID TRANSPORTER 1 of Arabidopsis thaliana (Mouse-ear cress).